The primary structure comprises 339 residues: Ketol-acid reductoisomerase (NADP(+)) (339 aa).

The KARI N-terminal Rossmann domain occupies 1–182 (MRVYYDRDAD…GGGRSGIIET (182 aa)). NADP(+)-binding positions include 24-27 (YGSQ), K48, S51, T53, and 83-86 (DELQ). The active site involves H108. Residue G134 coordinates NADP(+). In terms of domain architecture, KARI C-terminal knotted spans 183–328 (NFREECETDL…AKLRGMMPWI (146 aa)). 4 residues coordinate Mg(2+): D191, E195, E227, and E231. Substrate is bound at residue S252.

Belongs to the ketol-acid reductoisomerase family. Requires Mg(2+) as cofactor.

The enzyme catalyses (2R)-2,3-dihydroxy-3-methylbutanoate + NADP(+) = (2S)-2-acetolactate + NADPH + H(+). It catalyses the reaction (2R,3R)-2,3-dihydroxy-3-methylpentanoate + NADP(+) = (S)-2-ethyl-2-hydroxy-3-oxobutanoate + NADPH + H(+). The protein operates within amino-acid biosynthesis; L-isoleucine biosynthesis; L-isoleucine from 2-oxobutanoate: step 2/4. It functions in the pathway amino-acid biosynthesis; L-valine biosynthesis; L-valine from pyruvate: step 2/4. Involved in the biosynthesis of branched-chain amino acids (BCAA). Catalyzes an alkyl-migration followed by a ketol-acid reduction of (S)-2-acetolactate (S2AL) to yield (R)-2,3-dihydroxy-isovalerate. In the isomerase reaction, S2AL is rearranged via a Mg-dependent methyl migration to produce 3-hydroxy-3-methyl-2-ketobutyrate (HMKB). In the reductase reaction, this 2-ketoacid undergoes a metal-dependent reduction by NADPH to yield (R)-2,3-dihydroxy-isovalerate. The sequence is that of Ketol-acid reductoisomerase (NADP(+)) from Rhizobium etli (strain ATCC 51251 / DSM 11541 / JCM 21823 / NBRC 15573 / CFN 42).